The primary structure comprises 470 residues: Chromosomal replication initiator protein DnaA (470 aa).

Residues 1–79 (MTDDTWGLLR…AVQRLAFKVA (79 aa)) are domain I, interacts with DnaA modulators. Residues 79 to 128 (AANSPTRPVQPTMSEAIEEPAPLQTTVVDQLGNQEGNTSVKSPPEDLQAA) are domain II. The interval 129 to 350 (PLDPRFTFDS…GALTRLFAFA (222 aa)) is domain III, AAA+ region. ATP-binding residues include glycine 173, glycine 175, lysine 176, and threonine 177. The segment at 351 to 470 (SLVGREIDMD…VEMLRRSLEA (120 aa)) is domain IV, binds dsDNA.

The protein belongs to the DnaA family. Oligomerizes as a right-handed, spiral filament on DNA at oriC.

The protein localises to the cytoplasm. Its function is as follows. Plays an essential role in the initiation and regulation of chromosomal replication. ATP-DnaA binds to the origin of replication (oriC) to initiate formation of the DNA replication initiation complex once per cell cycle. Binds the DnaA box (a 9 base pair repeat at the origin) and separates the double-stranded (ds)DNA. Forms a right-handed helical filament on oriC DNA; dsDNA binds to the exterior of the filament while single-stranded (ss)DNA is stabiized in the filament's interior. The ATP-DnaA-oriC complex binds and stabilizes one strand of the AT-rich DNA unwinding element (DUE), permitting loading of DNA polymerase. After initiation quickly degrades to an ADP-DnaA complex that is not apt for DNA replication. Binds acidic phospholipids. This chain is Chromosomal replication initiator protein DnaA, found in Ruegeria sp. (strain TM1040) (Silicibacter sp.).